Consider the following 174-residue polypeptide: Interleukin-10 (174 aa).

The signal sequence occupies residues 1–16; that stretch reads MPTWMLLFCLLCVTSS. N-linked (GlcNAc...) asparagine glycosylation occurs at asparagine 17. 2 disulfides stabilise this stretch: cysteine 26–cysteine 122 and cysteine 76–cysteine 128.

The protein belongs to the IL-10 family. Homodimer. Interacts with IL10RA and IL10RB.

Its subcellular location is the secreted. In terms of biological role, major immune regulatory cytokine that acts on many cells of the immune system where it has profound anti-inflammatory functions, limiting excessive tissue disruption caused by inflammation. Mechanistically, IL10 binds to its heterotetrameric receptor comprising IL10RA and IL10RB leading to JAK1 and STAT2-mediated phosphorylation of STAT3. In turn, STAT3 translocates to the nucleus where it drives expression of anti-inflammatory mediators. Targets antigen-presenting cells (APCs) such as macrophages and monocytes and inhibits their release of pro-inflammatory cytokines including granulocyte-macrophage colony-stimulating factor /GM-CSF, granulocyte colony-stimulating factor/G-CSF, IL-1 alpha, IL-1 beta, IL-6, IL-8 and TNF-alpha. Also interferes with antigen presentation by reducing the expression of MHC-class II and co-stimulatory molecules, thereby inhibiting their ability to induce T cell activation. In addition, controls the inflammatory response of macrophages by reprogramming essential metabolic pathways including mTOR signaling. The chain is Interleukin-10 (IL10) from Trichosurus vulpecula (Brush-tailed possum).